The following is a 166-amino-acid chain: Putative peroxisomal peroxiredoxin (166 aa).

The 162-residue stretch at 5–166 folds into the Thioredoxin domain; sequence FPEDVKFLYI…SGVDAVLAAL (162 aa). Catalysis depends on C56, which acts as the Cysteine sulfenic acid (-SOH) intermediate.

The protein belongs to the peroxiredoxin family. Prx5 subfamily. As to quaternary structure, homodimer; disulfide-linked, upon oxidation.

The enzyme catalyses a hydroperoxide + [protein]-dithiol = [protein]-disulfide + an alcohol + H2O. Thiol-specific peroxidase that catalyzes the reduction of hydrogen peroxide and organic hydroperoxides to water and alcohols, respectively. Plays a role in cell protection against oxidative stress by detoxifying peroxides and as sensor of hydrogen peroxide-mediated signaling events. The chain is Putative peroxisomal peroxiredoxin from Lipomyces kononenkoae (Yeast).